Consider the following 479-residue polypeptide: MNYPAVAKELLTLLGGKSNITALAHCATRLRLAVADEQKIDEQAIDNLEGVKGQFKVAGQYQIIFGSGIVNQVYAEMAKLTGMSEMSTNDVASAGAEKQNIVQPAVKGLSDIFVPIIPAIVAGGLLMGIYNLLTAQGLFIDGKSLIEANPGLTDLANMINTFANAPFVYLPILLAFSASKKFGGNPYLGAALGMLMVHPDLLNGWGFGGASVSGNIPVWNILGFEIQKVGYQGSVLPVLVSAFILAKVELGLRKVIPSVLDNLLTPLLAIFIAGLLTFTVVGPFTRDIGFLLGDGLNWLYNTAGFVGGAVFGLIYAPFVITGMHHSFIAIETQLLADIATTGGTFIFPIAAMSNVSQGAAALAVGVMSKDKKMKGIAIPSGVTGLLGITEPAMFGVNLKLRYPFIAAVCAAALSSAFITMFNVKAQALGAAGLPGIISITPDKIGYYIAGMVIAFLTAFVLTIVLGIGDRAKVGKKAAA.

The PTS EIIB type-1 domain occupies 4–87; sequence PAVAKELLTL…AKLTGMSEMS (84 aa). The active-site Phosphocysteine intermediate; for EIIB activity is Cys-26. A run of 11 helical transmembrane segments spans residues 112–132, 158–178, 182–202, 204–224, 232–252, 264–284, 303–323, 345–365, 376–396, 403–423, and 448–468; these read IFVP…IYNL, MINT…AFSA, FGGN…PDLL, GWGF…ILGF, QGSV…ELGL, LTPL…VGPF, AGFV…ITGM, FIFP…LAVG, IAIP…MFGV, PFIA…MFNV, and IAGM…LGIG. The PTS EIIC type-1 domain occupies 120 to 477; it reads IVAGGLLMGI…GDRAKVGKKA (358 aa).

It localises to the cell inner membrane. The catalysed reaction is N(pros)-phospho-L-histidyl-[protein](out) + sucrose = sucrose 6(G)-phosphate(in) + L-histidyl-[protein]. Its function is as follows. The phosphoenolpyruvate-dependent sugar phosphotransferase system (sugar PTS), a major carbohydrate active transport system, catalyzes the phosphorylation of incoming sugar substrates concomitantly with their translocation across the cell membrane. This system is involved in sucrose transport. The chain is PTS system sucrose-specific EIIBC component from Vibrio alginolyticus.